The primary structure comprises 1148 residues: Protein pianissimo A (1148 aa).

A compositionally biased stretch (low complexity) spans 1–34; that stretch reads MTSSDSSVNTTSSSFGNISISSPNHSSSTPPLNN. The segment at 1–41 is disordered; sequence MTSSDSSVNTTSSSFGNISISSPNHSSSTPPLNNGNGNNVS. The region spanning 803-914 is the N-terminal Ras-GEF domain; the sequence is KVSALSLNVL…STSGVYLPPH (112 aa).

It belongs to the RICTOR family. Part of a complex, TORC2, consisting of tor, lst8, piaA and ripA. Additional proteins, such as 14-3-3 and heat-shock proteins, may also belong to the TORC2 complex.

The protein resides in the cytoplasm. Its function is as follows. Regulates cell growth, chemotaxis, signal relay and the actin cytoskeleton. Required for chemoattractant receptor and G protein-mediated activation of the 12 transmembrane domain adenylyl cyclase. Functions as a part of protein complex TORC2. TORC2, is presumed to be indirectly negatively modulated by rapamycin and regulates actin polarization. TORC2, but not TORC1, negatively regulates phagocytosis. This protein and dagA protein CRAC, a cytosolic regulator, are both essential for activation of the enzyme adenylyl cyclase. This protein and CRAC do not function redundantly. Both proteins are integral components of the adenylyl cyclase activation pathway. The sequence is that of Protein pianissimo A (piaA) from Dictyostelium discoideum (Social amoeba).